Reading from the N-terminus, the 735-residue chain is Catalase-peroxidase (735 aa).

Polar residues-rich tracts occupy residues 1-10 and 17-26; these read MENQNRQNAA and SVTNQSSNRT. Residues 1–30 are disordered; it reads MENQNRQNAAQCPFHGSVTNQSSNRTTNKD. Positions 100 to 223 form a cross-link, tryptophyl-tyrosyl-methioninium (Trp-Tyr) (with M-249); the sequence is WHSAGTYRIG…LAAVQMGLIY (124 aa). The Proton acceptor role is filled by histidine 101. A cross-link (tryptophyl-tyrosyl-methioninium (Tyr-Met) (with W-100)) is located at residues 223–249; it reads YVNPEGPDGKPDPKAAARDIRETFRRM. Histidine 264 is a binding site for heme b.

It belongs to the peroxidase family. Peroxidase/catalase subfamily. As to quaternary structure, homodimer or homotetramer. Requires heme b as cofactor. Post-translationally, formation of the three residue Trp-Tyr-Met cross-link is important for the catalase, but not the peroxidase activity of the enzyme.

The enzyme catalyses H2O2 + AH2 = A + 2 H2O. It catalyses the reaction 2 H2O2 = O2 + 2 H2O. In terms of biological role, bifunctional enzyme with both catalase and broad-spectrum peroxidase activity. Also displays NADH oxidase, INH lyase and isonicotinoyl-NAD synthase activities. This Geobacillus stearothermophilus (Bacillus stearothermophilus) protein is Catalase-peroxidase.